Here is a 129-residue protein sequence, read N- to C-terminus: Large ribosomal subunit protein bL12 (129 aa).

Belongs to the bacterial ribosomal protein bL12 family. As to quaternary structure, homodimer. Part of the ribosomal stalk of the 50S ribosomal subunit. Forms a multimeric L10(L12)X complex, where L10 forms an elongated spine to which 2 to 4 L12 dimers bind in a sequential fashion. Binds GTP-bound translation factors.

Its function is as follows. Forms part of the ribosomal stalk which helps the ribosome interact with GTP-bound translation factors. Is thus essential for accurate translation. The chain is Large ribosomal subunit protein bL12 from Thermosipho melanesiensis (strain DSM 12029 / CIP 104789 / BI429).